Here is a 261-residue protein sequence, read N- to C-terminus: Acidic leucine-rich nuclear phosphoprotein 32 family member B (261 aa).

LRR repeat units lie at residues 16-40 (PAAVRELVLDNCKSNDGKIEGLTAE), 43-64 (NLEFLSLINVGLISVSNLPKLP), 65-87 (KLKKLELSDNRICGGLDMLAEKL), and 89-110 (NLTHLNLSGNKLKDISTLEPLK). Lys-86 bears the N6-acetyllysine mark. The LRRCT domain occupies 123–161 (CEVTNLNDYRESVFKLLPQLTYLDGYDREDREAPDSDAE). The interval 149–261 (DREDREAPDS…RETDDEGEDD (113 aa)) is disordered. A compositionally biased stretch (acidic residues) spans 157 to 243 (DSDAEVDGVD…DEDEDEEEEE (87 aa)). The residue at position 158 (Ser-158) is a Phosphoserine. A compositionally biased stretch (basic and acidic residues) spans 244–254 (SGKGEKRKRET). A Nuclear localization signal motif is present at residues 249-252 (KRKR). Residue Thr-254 is modified to Phosphothreonine.

This sequence belongs to the ANP32 family. Interacts with histones H3 and H4. Interacts with KLF5; this interaction induces promoter region-specific histone incorporation and inhibition of histone acetylation by ANP32B. Some Glu residues are glycylated by TTLL8; a modification that generates a side chains of glycine on the gamma-carboxyl groups of specific glutamate residues. Post-translationally, directly cleaved by caspase-3/CASP3.

The protein localises to the nucleus. Its function is as follows. Multifunctional protein that is involved in the regulation of many processes including cell proliferation, apoptosis, cell cycle progression or transcription. Regulates the proliferation of neuronal stem cells, differentiation of leukemic cells and progression from G1 to S phase of the cell cycle. As negative regulator of caspase-3-dependent apoptosis, may act as an antagonist of ANP32A in regulating tissue homeostasis. Exhibits histone chaperone properties, able to recruit histones to certain promoters, thus regulating the transcription of specific genes. Also plays an essential role in the nucleocytoplasmic transport of specific mRNAs via the uncommon nuclear mRNA export receptor XPO1/CRM1. Participates in the regulation of adequate adaptive immune responses by acting on mRNA expression and cell proliferation. The sequence is that of Acidic leucine-rich nuclear phosphoprotein 32 family member B (ANP32B) from Bos taurus (Bovine).